The following is a 400-amino-acid chain: Tryptophan synthase beta chain (400 aa).

Lysine 92 is modified (N6-(pyridoxal phosphate)lysine).

This sequence belongs to the TrpB family. As to quaternary structure, tetramer of two alpha and two beta chains. It depends on pyridoxal 5'-phosphate as a cofactor.

It catalyses the reaction (1S,2R)-1-C-(indol-3-yl)glycerol 3-phosphate + L-serine = D-glyceraldehyde 3-phosphate + L-tryptophan + H2O. The protein operates within amino-acid biosynthesis; L-tryptophan biosynthesis; L-tryptophan from chorismate: step 5/5. The beta subunit is responsible for the synthesis of L-tryptophan from indole and L-serine. In Neisseria gonorrhoeae, this protein is Tryptophan synthase beta chain.